The sequence spans 521 residues: BAR/IMD domain-containing adapter protein 2 (521 aa).

The IMD domain maps to 1-250; the sequence is MSLSRSEEMH…VQLMQQIASS (250 aa). Residues 132–153 are a coiled coil; the sequence is DALDKCQAELKKLRKKSQGSKN. A phosphoserine mark is found at serine 262, serine 324, serine 326, and serine 337. Positions 299 to 370 are disordered; that stretch reads VMNGVAGPDS…TLPRSSSMAA (72 aa). Residues 321–335 are compositionally biased toward low complexity; it reads QPKSLSPPQSQSKLS. Threonine 341 carries the phosphothreonine modification. Serine 347 carries the post-translational modification Phosphoserine. Over residues 349-368 the composition is skewed to polar residues; sequence TPKNSYATTENKTLPRSSSM. Threonine 361 is modified (phosphothreonine). Serine 367, serine 385, serine 396, and serine 455 each carry phosphoserine. The SH3 domain occupies 375–438; sequence NGRMRVKAIF…PFSYTRVLDS (64 aa). Residues 445-480 are disordered; the sequence is HMSLQQGKSSSTGNLLDKDDLAVPPPDYGTSSRAFP. Over residues 447–458 the composition is skewed to polar residues; sequence SLQQGKSSSTGN.

In terms of assembly, homodimer. Interacts with CDC42 and RAC1 that have been activated by GTP binding. Interacts with ATN1, ADGRB1, DIAPH1, EPS8, SHANK1, SHANK2, SHANK3, TIAM1, WASF1 and WASF2. Interacts with ENAH after recruitment of CDC42. Phosphorylated on tyrosine residues by INSR in response to insulin treatment.

The protein localises to the cytoplasm. It is found in the membrane. Its subcellular location is the cell projection. The protein resides in the filopodium. It localises to the ruffle. The protein localises to the cytoskeleton. Functionally, adapter protein that links membrane-bound small G-proteins to cytoplasmic effector proteins. Necessary for CDC42-mediated reorganization of the actin cytoskeleton and for RAC1-mediated membrane ruffling. Involved in the regulation of the actin cytoskeleton by WASF family members and the Arp2/3 complex. Plays a role in neurite growth. Acts syngeristically with ENAH to promote filipodia formation. Plays a role in the reorganization of the actin cytoskeleton in response to bacterial infection. Participates in actin bundling when associated with EPS8, promoting filopodial protrusions. This is BAR/IMD domain-containing adapter protein 2 (BAIAP2) from Cricetulus griseus (Chinese hamster).